A 432-amino-acid chain; its full sequence is Glutamyl-tRNA reductase (432 aa).

Substrate is bound by residues 55 to 58 (TCNR), Ser-114, 119 to 121 (ETQ), and Gln-125. Residue Cys-56 is the Nucleophile of the active site. 194–199 (GAGEMI) provides a ligand contact to NADP(+).

This sequence belongs to the glutamyl-tRNA reductase family. Homodimer.

The catalysed reaction is (S)-4-amino-5-oxopentanoate + tRNA(Glu) + NADP(+) = L-glutamyl-tRNA(Glu) + NADPH + H(+). It functions in the pathway porphyrin-containing compound metabolism; protoporphyrin-IX biosynthesis; 5-aminolevulinate from L-glutamyl-tRNA(Glu): step 1/2. Functionally, catalyzes the NADPH-dependent reduction of glutamyl-tRNA(Glu) to glutamate 1-semialdehyde (GSA). The protein is Glutamyl-tRNA reductase of Burkholderia pseudomallei (strain 1710b).